The following is a 493-amino-acid chain: Calcium-binding tyrosine phosphorylation-regulated protein (493 aa).

In terms of domain architecture, RIIa spans 12–49 (YGLKTLLEGISRAVLKTNPSNINQFAAAYFQELTMYRG). Disordered stretches follow at residues 85–164 (EPGK…VSPE), 244–271 (DLGS…QEPP), 330–354 (NEQS…TTSG), and 426–493 (IVSD…STAE). Residues 90–100 (SVESKVPTQME) are compositionally biased toward polar residues. Positions 101–117 (KSTDTDEDNVTRTEYSD) are enriched in basic and acidic residues. The segment covering 141–152 (SSKPATPKTTTP) has biased composition (low complexity). Position 151 is a phosphothreonine (Thr-151). Position 155 is a phosphoserine (Ser-155). Polar residues-rich tracts occupy residues 426 to 442 (IVSD…NSVP) and 461 to 470 (SGTSVKSSSG). The segment covering 484 to 493 (IEPEGESTAE) has biased composition (acidic residues).

In terms of assembly, interacts with FSCB. Isoform 3 self-associates. Isoform 3 and isoform 5 interact with GSK3B. Isoform 1 does not interact with GSK3B. Post-translationally, isoform 1 is phosphorylated on tyrosine residues during in vitro capacitation. Isoform 3 and isoform 5 are phosphorylated by GSK3B in vitro. Dephosphorylation affects its ability to bind calcium. Expressed in elongating spermatids and spermatozoa (at protein level). Isoform 1 is expressed in testis. Isoform 3 and isoform 5 are also expressed in brain, pancreas and numerous brain tumors.

It localises to the cytoplasm. Its subcellular location is the cytoskeleton. The protein localises to the cell projection. The protein resides in the cilium. It is found in the flagellum. It localises to the nucleus. Functionally, may function as a regulator of both motility- and head-associated functions such as capacitation and the acrosome reaction. Isoform 1 binds calcium in vitro. Isoform 2 and isoform 6 probably bind calcium. Isoform 3 and isoform 5 do not bind calcium in vitro. Isoform 4 probably does not bind calcium. This chain is Calcium-binding tyrosine phosphorylation-regulated protein (CABYR), found in Homo sapiens (Human).